Here is a 377-residue protein sequence, read N- to C-terminus: Putative glutamate--cysteine ligase 2 (377 aa).

The protein belongs to the glutamate--cysteine ligase type 2 family. YbdK subfamily.

It carries out the reaction L-cysteine + L-glutamate + ATP = gamma-L-glutamyl-L-cysteine + ADP + phosphate + H(+). Functionally, ATP-dependent carboxylate-amine ligase which exhibits weak glutamate--cysteine ligase activity. In Chromobacterium violaceum (strain ATCC 12472 / DSM 30191 / JCM 1249 / CCUG 213 / NBRC 12614 / NCIMB 9131 / NCTC 9757 / MK), this protein is Putative glutamate--cysteine ligase 2.